The sequence spans 358 residues: Vesicular integral-membrane protein VIP36 (358 aa).

An N-terminal signal peptide occupies residues Met-1–Ala-46. The Lumenal portion of the chain corresponds to Asp-47–Arg-324. The L-type lectin-like domain maps to Glu-54–Leu-278. Residues Ser-98 and Asp-133 each coordinate a carbohydrate. 3 residues coordinate Ca(2+): Asp-164, Tyr-166, and Asn-168. Tyr-166 to Asn-168 is a binding site for a carbohydrate. Asn-185 is a glycosylation site (N-linked (GlcNAc...) asparagine). Residue His-192 coordinates a carbohydrate. Position 195 (Asp-195) interacts with Ca(2+). A disulfide bond links Cys-204 and Cys-241. Gly-262 to Leu-264 is an a carbohydrate binding site. The helical transmembrane segment at Val-325 to Phe-347 threads the bilayer. Topologically, residues Gln-348–Tyr-358 are cytoplasmic.

It depends on Ca(2+) as a cofactor.

It localises to the golgi apparatus membrane. Its function is as follows. Plays a role as an intracellular lectin in the early secretory pathway. Interacts with N-acetyl-D-galactosamine and high-mannose type glycans and may also bind to O-linked glycans. Involved in the transport and sorting of glycoproteins carrying high mannose-type glycans. The chain is Vesicular integral-membrane protein VIP36 (Lman2) from Mus musculus (Mouse).